The primary structure comprises 880 residues: Leucine--tRNA ligase (880 aa).

Residues 49-59 carry the 'HIGH' region motif; it reads PYPSGRIHMGH. Positions 638–642 match the 'KMSKS' region motif; that stretch reads KMSKS. Residue lysine 641 coordinates ATP.

Belongs to the class-I aminoacyl-tRNA synthetase family.

It localises to the cytoplasm. It catalyses the reaction tRNA(Leu) + L-leucine + ATP = L-leucyl-tRNA(Leu) + AMP + diphosphate. The polypeptide is Leucine--tRNA ligase (Bartonella quintana (strain Toulouse) (Rochalimaea quintana)).